A 1663-amino-acid polypeptide reads, in one-letter code: MATDGASCEPDLSRAPEDAAGAAAEAAKKEFDVDTLSKSELRMLLSVMEGELEARDLVIEALRARRKEVFIQERYGRFNLNDPFLALQRDYEAGAGDKEKKPVCTNPLSILEAVMAHCKKMQERMSAQLAAAESRQKKLEMEKLQLQALEQEHKKLAARLEEERGKNKQVVLMLVKECKQLSGKVIEEAQKLEDVMAKLEEEKKKTNELEEELSAEKRRSTEMEAQMEKQLSEFDTEREQLRAKLNREEAHTTDLKEEIDKMRKMIEQLKRGSDSKPSLSLPRKTKDRRLVSISVGTEGTVTRSVACQTDLVTENADHMKKLPLTMPVKPSTGSPLVSANAKGSVCTSATMARPGIDRQASYGDLIGASVPAFPPPSANKIEENGPSTGSTPDPTSSTPPLPSNAAPPTAQTPGIAPQNSQAPPMHSLHSPCANTSLHPGLNPRIQAARFRFQGNANDPDQNGNTTQSPPSRDVSPTSRDNLVAKQLARNTVTQALSRFTSPQAGAPSRPGVPPTGDVGTHPPVGRTSLKTHGVARVDRGNPPPIPPKKPGLSQTPSPPHPQLKVIIDSSRASNTGAKVDNKTVASTPSSLPQGNRVINEENLPKSSSPQLPPKPSIDLTVAPAGCAVSALATSQVGAWPAATPGLNQPACSDSSLVIPTTIAFCSSINPVSASSCRPGASDSLLVTASGWSPSLTPLLMSGGPAPLAGRPTLLQQAAAQGNVTLLSMLLNEEGLDINYSCEDGHSALYSAAKNGHTDCVRLLLSAEAQVNAADKNGFTPLCAAAAQGHFECVELLISYDANINHAADGGQTPLYLACKNGNKECIKLLLEAGTNRSVKTTDGWTPVHAAVDTGNVDSLKLLMYHRIPAHGNSFNEEESESSVFDLDGGEESPEGISKPVVPADLINHANREGWTAAHIAASKGFKNCLEILCRHGGLEPERRDKCNRTVHDVATDDCKHLLENLNALKIPLRISVGEIEPSNYGSDDLECENTICALNIRKQTSWDDFSKAVSQALTNHFQAISSDGWWSLEDVTCNNTTDSNIGLSARSIRSITLGNVPWSVGQSFAQSPWDFMRKNKAEHITVLLSGPQEGCLSSVTYASMIPLQMMQNYLRLVEQYHNVIFHGPEGSLQDYIVHQLALCLKHRQMAAGFSCEIVRAEVDAGFSKEQLLDLFISSACLIPVKQSPSKKKIIIILENLEKSSLSELLRDFLAPLENRSTESPCTFQKGNGLSECYYFHENCFLMGTIAKACLQGSDLLVQQHFRWVQLRWDGEPMQGLLQRFLRRKVVNKFKGQAPSPCDPVCKIVDWALSVWRQLNSCLARLGTPEALLGPKYFLSCPVVPGHAQVTVKWMSKLWNGVIAPRVQEAILSRASVKRQPGFGQTTAKRHPSQGQQAVVKAALSILLNKAVLHGCPLPRAELDQHTADFKGGSFPLSIVSSYNTCNKKKGESGAWRKVNTSPRRKSGRFSLPTWNKPDLSTEGMKNKTISQLNCNRNASLSKQKSLENDLSLTLNLDQRLSLGSDDEADLVKELQSMCSSKSESDISKIADSRDDLRMFDSSGNNPVLSATINNLRMPVSQKEVSPLSSHQTTECSNSKSKTELGVSRVKSFLPVPRSKVTQCSQNTKRSSSSSNTRQIEINNNSKEVNWNLHKNEHLEKPNK.

5 disordered regions span residues 1–23 (MATD…AGAA), 203–222 (KKKT…RSTE), 367–440 (GASV…LHPG), 454–478 (GNAN…SPTS), and 498–616 (RFTS…PKPS). Residues 119–276 (KKMQERMSAQ…EQLKRGSDSK (158 aa)) are a coiled coil. Residues 386-396 (PSTGSTPDPTS) are compositionally biased toward low complexity. An Asymmetric dimethylarginine modification is found at arginine 498. The span at 583-593 (TVASTPSSLPQ) shows a compositional bias: polar residues. ANK repeat units follow at residues 709–739 (GRPT…DINY), 743–772 (DGHS…QVNA), 776–805 (NGFT…NINH), 809–838 (GGQT…NRSV), 842–871 (DGWT…PAHG), and 912–942 (EGWT…EPER). The tract at residues 1449-1482 (KGESGAWRKVNTSPRRKSGRFSLPTWNKPDLSTE) is disordered. Serine 1524 carries the phosphoserine modification. The disordered stretch occupies residues 1581–1663 (QKEVSPLSSH…KNEHLEKPNK (83 aa)). Residues 1582–1599 (KEVSPLSSHQTTECSNSK) are compositionally biased toward polar residues. Low complexity predominate over residues 1624-1638 (SQNTKRSSSSSNTRQ). Positions 1639–1648 (IEINNNSKEV) are enriched in polar residues. Over residues 1653-1663 (HKNEHLEKPNK) the composition is skewed to basic and acidic residues.

In terms of assembly, interacts with CTTN/cortactin SH3 domain. Interacts with STRN, STRN4/zinedin and MOB4/phocein; this interactions mediate the association with the STRIPAK core complex and may regulate dendritic spine distribution of the STRIPAK complex in hippocampal neurons. Activation of glutamate receptors weakens the interaction with STRN and STRN4. Highest expression in brain. Also expressed in kidney, pancreas, lung, heart, liver, skeletal muscle and placenta.

The protein localises to the cytoplasm. It localises to the cell cortex. Its subcellular location is the cell projection. The protein resides in the dendritic spine. In terms of biological role, regulates the dendritic spine distribution of CTTN/cortactin in hippocampal neurons, and thus controls dendritic spinogenesis and dendritic spine maintenance. Associates with the striatin-interacting phosphatase and kinase (STRIPAK) core complex to regulate dendritic spine distribution of the STRIPAK complex in hippocampal neurons. This is Cortactin-binding protein 2 from Homo sapiens (Human).